The chain runs to 351 residues: Mitogen-activated protein kinase 2 (351 aa).

Residues 16–304 (YEILDVIGEG…AEEALQHNYL (289 aa)) form the Protein kinase domain. ATP-binding positions include 22–30 (IGEGAYGIV) and K45. The active-site Proton acceptor is D140. At T176 the chain carries Phosphothreonine. Positions 176-178 (TEY) match the TXY motif. Y178 is subject to Phosphotyrosine.

Belongs to the protein kinase superfamily. CMGC Ser/Thr protein kinase family. MAP kinase subfamily. The cofactor is Mg(2+). Mn(2+) is required as a cofactor. Post-translationally, dually phosphorylated on Thr-176 and Tyr-178, which activates the enzyme.

The protein resides in the nucleus. It carries out the reaction L-seryl-[protein] + ATP = O-phospho-L-seryl-[protein] + ADP + H(+). The catalysed reaction is L-threonyl-[protein] + ATP = O-phospho-L-threonyl-[protein] + ADP + H(+). Activated by tyrosine and threonine phosphorylation. Inhibited by the MEK inhibitor U0126 but not by the p38 inhibitor SB203580. Cobalt abolishes kinase activity, while calcium, copper and nickel have little effect on kinase activity. Its function is as follows. Serine-threonine protein kinase which may be involved in pheromone signaling. Functionally complements the MAPK pheromone signaling pathway in S.cerevisiae. This Pneumocystis carinii protein is Mitogen-activated protein kinase 2.